The primary structure comprises 396 residues: NADH-quinone oxidoreductase subunit D (396 aa).

Belongs to the complex I 49 kDa subunit family. As to quaternary structure, NDH-1 is composed of 14 different subunits. Subunits NuoB, C, D, E, F, and G constitute the peripheral sector of the complex.

The protein localises to the cell inner membrane. It catalyses the reaction a quinone + NADH + 5 H(+)(in) = a quinol + NAD(+) + 4 H(+)(out). Its function is as follows. NDH-1 shuttles electrons from NADH, via FMN and iron-sulfur (Fe-S) centers, to quinones in the respiratory chain. The immediate electron acceptor for the enzyme in this species is believed to be ubiquinone. Couples the redox reaction to proton translocation (for every two electrons transferred, four hydrogen ions are translocated across the cytoplasmic membrane), and thus conserves the redox energy in a proton gradient. The polypeptide is NADH-quinone oxidoreductase subunit D (Methylorubrum populi (strain ATCC BAA-705 / NCIMB 13946 / BJ001) (Methylobacterium populi)).